The following is a 432-amino-acid chain: Enolase (432 aa).

Q163 lines the (2R)-2-phosphoglycerate pocket. The Proton donor role is filled by E205. Residues D242, E285, and D312 each contribute to the Mg(2+) site. The (2R)-2-phosphoglycerate site is built by K337, R366, S367, and K388. Catalysis depends on K337, which acts as the Proton acceptor.

The protein belongs to the enolase family. Mg(2+) is required as a cofactor.

The protein resides in the cytoplasm. It is found in the secreted. The protein localises to the cell surface. The catalysed reaction is (2R)-2-phosphoglycerate = phosphoenolpyruvate + H2O. Its pathway is carbohydrate degradation; glycolysis; pyruvate from D-glyceraldehyde 3-phosphate: step 4/5. Its function is as follows. Catalyzes the reversible conversion of 2-phosphoglycerate (2-PG) into phosphoenolpyruvate (PEP). It is essential for the degradation of carbohydrates via glycolysis. This Desulfovibrio desulfuricans (strain ATCC 27774 / DSM 6949 / MB) protein is Enolase.